A 20-amino-acid polypeptide reads, in one-letter code: Dihydrolipoamide-residue succinyltransferase component of 2-oxoglutarate dehydrogenase complex (20 aa).

The protein belongs to the 2-oxoacid dehydrogenase family. In terms of assembly, forms a 24-polypeptide structural core with octahedral symmetry. The cofactor is (R)-lipoate.

The protein resides in the mitochondrion membrane. The enzyme catalyses N(6)-[(R)-dihydrolipoyl]-L-lysyl-[protein] + succinyl-CoA = N(6)-[(R)-S(8)-succinyldihydrolipoyl]-L-lysyl-[protein] + CoA. It participates in amino-acid degradation; L-lysine degradation via saccharopine pathway; glutaryl-CoA from L-lysine: step 6/6. In terms of biological role, the 2-oxoglutarate dehydrogenase complex catalyzes the overall conversion of 2-oxoglutarate to succinyl-CoA and CO(2). It contains multiple copies of three enzymatic components: 2-oxoglutarate dehydrogenase (E1), dihydrolipoamide succinyltransferase (E2) and lipoamide dehydrogenase (E3). In Solanum tuberosum (Potato), this protein is Dihydrolipoamide-residue succinyltransferase component of 2-oxoglutarate dehydrogenase complex.